Here is a 263-residue protein sequence, read N- to C-terminus: Probable ribosomal RNA small subunit methyltransferase A (263 aa).

L12, G37, E58, D83, and N100 together coordinate S-adenosyl-L-methionine.

Belongs to the class I-like SAM-binding methyltransferase superfamily. rRNA adenine N(6)-methyltransferase family. RsmA subfamily.

It is found in the cytoplasm. Functionally, specifically dimethylates two adjacent adenosines in the loop of a conserved hairpin near the 3'-end of 16S rRNA in the 30S particle. May play a critical role in biogenesis of 30S subunits. The sequence is that of Probable ribosomal RNA small subunit methyltransferase A from Methanococcus maripaludis (strain C6 / ATCC BAA-1332).